Here is a 33-residue protein sequence, read N- to C-terminus: Ice-structuring protein GS-5 (33 aa).

Position 1 is a blocked amino end (Met) (M1).

The protein belongs to the type-I AFP family.

Its function is as follows. Antifreeze proteins lower the blood freezing point. This is Ice-structuring protein GS-5 from Myoxocephalus aenaeus (Grubby sculpin).